Reading from the N-terminus, the 582-residue chain is V-type ATP synthase alpha chain (582 aa).

Position 231–238 (231–238) interacts with ATP; the sequence is GPFGSGKT.

It belongs to the ATPase alpha/beta chains family.

It catalyses the reaction ATP + H2O + 4 H(+)(in) = ADP + phosphate + 5 H(+)(out). In terms of biological role, produces ATP from ADP in the presence of a proton gradient across the membrane. The V-type alpha chain is a catalytic subunit. The sequence is that of V-type ATP synthase alpha chain from Deinococcus geothermalis (strain DSM 11300 / CIP 105573 / AG-3a).